Reading from the N-terminus, the 90-residue chain is Probable Fe(2+)-trafficking protein (90 aa).

This sequence belongs to the Fe(2+)-trafficking protein family. Monomer.

Functionally, could be a mediator in iron transactions between iron acquisition and iron-requiring processes, such as synthesis and/or repair of Fe-S clusters in biosynthetic enzymes. In Hamiltonella defensa subsp. Acyrthosiphon pisum (strain 5AT), this protein is Probable Fe(2+)-trafficking protein.